We begin with the raw amino-acid sequence, 183 residues long: dCTP deaminase (183 aa).

Residues 97–102 (RSSFAR) and Asp-113 each bind dCTP. Residue Glu-123 is the Proton donor/acceptor of the active site. DCTP contacts are provided by Tyr-155 and Gln-162.

This sequence belongs to the dCTP deaminase family. Homotrimer.

It carries out the reaction dCTP + H2O + H(+) = dUTP + NH4(+). Its pathway is pyrimidine metabolism; dUMP biosynthesis; dUMP from dCTP (dUTP route): step 1/2. Its function is as follows. Catalyzes the deamination of dCTP to dUTP. The polypeptide is dCTP deaminase (Sulfurisphaera tokodaii (strain DSM 16993 / JCM 10545 / NBRC 100140 / 7) (Sulfolobus tokodaii)).